A 406-amino-acid chain; its full sequence is Bifunctional enzyme IspD/IspF (406 aa).

The segment at Met1–Thr247 is 2-C-methyl-D-erythritol 4-phosphate cytidylyltransferase. A 2-C-methyl-D-erythritol 2,4-cyclodiphosphate synthase region spans residues Phe248–Leu406. Residues Asp254 and His256 each coordinate a divalent metal cation. 4-CDP-2-C-methyl-D-erythritol 2-phosphate contacts are provided by residues Asp254–His256 and His280–Ser281. Position 288 (His288) interacts with a divalent metal cation. Residues Asp302–Gly304, Phe307–Asp311, Thr378–Glu381, Phe385, and Lys388 contribute to the 4-CDP-2-C-methyl-D-erythritol 2-phosphate site.

The protein in the N-terminal section; belongs to the IspD/TarI cytidylyltransferase family. IspD subfamily. This sequence in the C-terminal section; belongs to the IspF family. A divalent metal cation serves as cofactor.

The catalysed reaction is 2-C-methyl-D-erythritol 4-phosphate + CTP + H(+) = 4-CDP-2-C-methyl-D-erythritol + diphosphate. It catalyses the reaction 4-CDP-2-C-methyl-D-erythritol 2-phosphate = 2-C-methyl-D-erythritol 2,4-cyclic diphosphate + CMP. It participates in isoprenoid biosynthesis; isopentenyl diphosphate biosynthesis via DXP pathway; isopentenyl diphosphate from 1-deoxy-D-xylulose 5-phosphate: step 2/6. Its pathway is isoprenoid biosynthesis; isopentenyl diphosphate biosynthesis via DXP pathway; isopentenyl diphosphate from 1-deoxy-D-xylulose 5-phosphate: step 4/6. In terms of biological role, bifunctional enzyme that catalyzes the formation of 4-diphosphocytidyl-2-C-methyl-D-erythritol from CTP and 2-C-methyl-D-erythritol 4-phosphate (MEP) (IspD), and catalyzes the conversion of 4-diphosphocytidyl-2-C-methyl-D-erythritol 2-phosphate (CDP-ME2P) to 2-C-methyl-D-erythritol 2,4-cyclodiphosphate (ME-CPP) with a corresponding release of cytidine 5-monophosphate (CMP) (IspF). This chain is Bifunctional enzyme IspD/IspF, found in Helicobacter pylori (strain HPAG1).